The sequence spans 1058 residues: Protein argonaute MEL1 (1058 aa).

Gly residues-rich tracts occupy residues 1 to 12 and 24 to 37; these read MAYRGGGRGGRG and DVPG…GGGA. Disordered stretches follow at residues 1 to 77 and 115 to 147; these read MAYR…YGAP and RAPP…PSAT. Pro residues predominate over residues 48–70; that stretch reads WPPPGMTPRPGPPQPQYPRPGPP. A compositionally biased stretch (low complexity) spans 121–147; that stretch reads HSSAPAPYQPAAAAPAPSSSSTAPSAT. Residues 407-520 form the PAZ domain; that stretch reads TVIQFVEEFL…LPMEVCKIVE (114 aa). One can recognise a Piwi domain in the interval 696-1016; that stretch reads LLIVILPEVS…AAFRARYYVE (321 aa).

It belongs to the argonaute family. Ago subfamily.

It is found in the nucleus. It localises to the nucleolus. In terms of biological role, essential for the progression of premeiotic mitosis and meiosis during sporogenesis. Regulates the cell division of premeiotic germ cells, the proper modification of meiotic chromosomes, and the faithful progression of meiosis, probably via small RNA-mediated gene silencing. May be involved in histone H3 'Lys-9' demethylation in the pericentromeric region. The polypeptide is Protein argonaute MEL1 (MEL1) (Oryza sativa subsp. japonica (Rice)).